Here is a 103-residue protein sequence, read N- to C-terminus: UPF0235 protein Dole_0289 (103 aa).

This sequence belongs to the UPF0235 family.

This is UPF0235 protein Dole_0289 from Desulfosudis oleivorans (strain DSM 6200 / JCM 39069 / Hxd3) (Desulfococcus oleovorans).